A 139-amino-acid chain; its full sequence is Nucleoside diphosphate kinase (139 aa).

Residues Lys-10, Phe-58, Arg-86, Thr-92, Arg-103, and Asn-113 each contribute to the ATP site. The active-site Pros-phosphohistidine intermediate is the His-116.

This sequence belongs to the NDK family. As to quaternary structure, homotetramer. The cofactor is Mg(2+).

Its subcellular location is the cytoplasm. It catalyses the reaction a 2'-deoxyribonucleoside 5'-diphosphate + ATP = a 2'-deoxyribonucleoside 5'-triphosphate + ADP. The enzyme catalyses a ribonucleoside 5'-diphosphate + ATP = a ribonucleoside 5'-triphosphate + ADP. Functionally, major role in the synthesis of nucleoside triphosphates other than ATP. The ATP gamma phosphate is transferred to the NDP beta phosphate via a ping-pong mechanism, using a phosphorylated active-site intermediate. This Phenylobacterium zucineum (strain HLK1) protein is Nucleoside diphosphate kinase.